The chain runs to 259 residues: Succinate dehydrogenase iron-sulfur subunit (259 aa).

A 2Fe-2S ferredoxin-type domain is found at 28 to 119; that stretch reads RRFNIYRWDP…DVNIYPLPHM (92 aa). Residues Cys80, Cys85, and Cys100 each contribute to the [2Fe-2S] cluster site. Residues 160–190 form the 4Fe-4S ferredoxin-type domain; sequence DRKKLDGLYECVMCASCSTACPSYWWNGDRY. Positions 170, 173, and 176 each coordinate [4Fe-4S] cluster. Cys180 contributes to the [3Fe-4S] cluster binding site. Trp185 contributes to the a ubiquinone binding site. [3Fe-4S] cluster is bound by residues Cys227 and Cys233. Cys237 provides a ligand contact to [4Fe-4S] cluster.

Belongs to the succinate dehydrogenase/fumarate reductase iron-sulfur protein family. As to quaternary structure, part of an enzyme complex containing four subunits: a flavoprotein, an iron-sulfur, cytochrome b-556, and a hydrophobic anchor protein. [2Fe-2S] cluster is required as a cofactor. It depends on [3Fe-4S] cluster as a cofactor. The cofactor is [4Fe-4S] cluster.

The enzyme catalyses a quinone + succinate = fumarate + a quinol. It participates in carbohydrate metabolism; tricarboxylic acid cycle; fumarate from succinate (bacterial route): step 1/1. The chain is Succinate dehydrogenase iron-sulfur subunit (sdhB) from Paracoccus denitrificans.